The primary structure comprises 20 residues: Antimicrobial peptide AJN-10 (20 aa).

Its subcellular location is the secreted. Functionally, displays antimicrobial activity against the Gram-negative bacterium A.hydrophila. The polypeptide is Antimicrobial peptide AJN-10 (Anguilla japonica (Japanese eel)).